Reading from the N-terminus, the 918-residue chain is Isoleucine--tRNA ligase (918 aa).

The short motif at 57–67 is the 'HIGH' region element; it reads PYANGHIHIGT. Glutamate 552 is an L-isoleucyl-5'-AMP binding site. Residues 593–597 carry the 'KMSKS' region motif; the sequence is KMSKS. Residue lysine 596 participates in ATP binding. Residues cysteine 886, cysteine 889, cysteine 906, and cysteine 909 each coordinate Zn(2+).

The protein belongs to the class-I aminoacyl-tRNA synthetase family. IleS type 1 subfamily. As to quaternary structure, monomer. Zn(2+) serves as cofactor.

Its subcellular location is the cytoplasm. The catalysed reaction is tRNA(Ile) + L-isoleucine + ATP = L-isoleucyl-tRNA(Ile) + AMP + diphosphate. In terms of biological role, catalyzes the attachment of isoleucine to tRNA(Ile). As IleRS can inadvertently accommodate and process structurally similar amino acids such as valine, to avoid such errors it has two additional distinct tRNA(Ile)-dependent editing activities. One activity is designated as 'pretransfer' editing and involves the hydrolysis of activated Val-AMP. The other activity is designated 'posttransfer' editing and involves deacylation of mischarged Val-tRNA(Ile). The chain is Isoleucine--tRNA ligase from Thermotoga neapolitana (strain ATCC 49049 / DSM 4359 / NBRC 107923 / NS-E).